The chain runs to 790 residues: Polyribonucleotide nucleotidyltransferase (790 aa).

Asp-498 and Asp-504 together coordinate Mg(2+). The KH domain maps to 565 to 624 (PRILRIKIKPEQIGEVIGPGGRVIRAIQEQTGTKISIEEDGTVFISAANEDAARRAVREI). Residues 634–702 (GEIFYGRVVT…PDGKINLSRK (69 aa)) enclose the S1 motif domain. Residues 710–790 (AERAATAQAP…KELLGEDEPN (81 aa)) form a disordered region. Positions 739–755 (PERRPGPPTPRRPEQRG) are enriched in basic and acidic residues. The span at 757–772 (SRPPRPQAQRSTPPPG) shows a compositional bias: pro residues.

This sequence belongs to the polyribonucleotide nucleotidyltransferase family. The cofactor is Mg(2+).

It localises to the cytoplasm. It carries out the reaction RNA(n+1) + phosphate = RNA(n) + a ribonucleoside 5'-diphosphate. Its function is as follows. Involved in mRNA degradation. Catalyzes the phosphorolysis of single-stranded polyribonucleotides processively in the 3'- to 5'-direction. The polypeptide is Polyribonucleotide nucleotidyltransferase (Thermomicrobium roseum (strain ATCC 27502 / DSM 5159 / P-2)).